Here is a 119-residue protein sequence, read N- to C-terminus: T cell receptor alpha variable 29/delta variable 5 (119 aa).

The first 21 residues, 1-21 (MAMLLGASVLILWLQPDWVNS), serve as a signal peptide directing secretion. The 98-residue stretch at 22–119 (QQKNDDQQVK…DSAVYFCAAS (98 aa)) folds into the Ig-like domain. Cysteines 49 and 116 form a disulfide. The N-linked (GlcNAc...) asparagine glycan is linked to asparagine 93.

In terms of assembly, alpha-beta TR is a heterodimer composed of an alpha and beta chain; disulfide-linked. The alpha-beta TR is associated with the transmembrane signaling CD3 coreceptor proteins to form the TR-CD3 (TcR or TCR). The assembly of alpha-beta TR heterodimers with CD3 occurs in the endoplasmic reticulum where a single alpha-beta TR heterodimer associates with one CD3D-CD3E heterodimer, one CD3G-CD3E heterodimer and one CD247 homodimer forming a stable octameric structure. CD3D-CD3E and CD3G-CD3E heterodimers preferentially associate with TR alpha and TR beta chains, respectively. The association of the CD247 homodimer is the last step of TcR assembly in the endoplasmic reticulum and is required for transport to the cell surface.

The protein resides in the cell membrane. Its function is as follows. V region of the variable domain of T cell receptor (TR) alpha chain that participates in the antigen recognition. Alpha-beta T cell receptors are antigen specific receptors which are essential to the immune response and are present on the cell surface of T lymphocytes. Recognize peptide-major histocompatibility (MH) (pMH) complexes that are displayed by antigen presenting cells (APC), a prerequisite for efficient T cell adaptive immunity against pathogens. Binding of alpha-beta TR to pMH complex initiates TR-CD3 clustering on the cell surface and intracellular activation of LCK that phosphorylates the ITAM motifs of CD3G, CD3D, CD3E and CD247 enabling the recruitment of ZAP70. In turn ZAP70 phosphorylates LAT, which recruits numerous signaling molecules to form the LAT signalosome. The LAT signalosome propagates signal branching to three major signaling pathways, the calcium, the mitogen-activated protein kinase (MAPK) kinase and the nuclear factor NF-kappa-B (NF-kB) pathways, leading to the mobilization of transcription factors that are critical for gene expression and essential for T cell growth and differentiation. The T cell repertoire is generated in the thymus, by V-(D)-J rearrangement. This repertoire is then shaped by intrathymic selection events to generate a peripheral T cell pool of self-MH restricted, non-autoaggressive T cells. Post-thymic interaction of alpha-beta TR with the pMH complexes shapes TR structural and functional avidity. The sequence is that of T cell receptor alpha variable 29/delta variable 5 from Homo sapiens (Human).